The primary structure comprises 86 residues: Cell division topological specificity factor (86 aa).

Belongs to the MinE family.

Its function is as follows. Prevents the cell division inhibition by proteins MinC and MinD at internal division sites while permitting inhibition at polar sites. This ensures cell division at the proper site by restricting the formation of a division septum at the midpoint of the long axis of the cell. This Shewanella frigidimarina (strain NCIMB 400) protein is Cell division topological specificity factor.